The following is a 313-amino-acid chain: Small glutamine-rich tetratricopeptide repeat-containing protein alpha (313 aa).

Positions 69-97 are disordered; sequence KELPPDLRSPQETPPSEEDSAEAERLKTE. Ser77 bears the Phosphoserine mark. Thr81 carries the phosphothreonine modification. Ser84 bears the Phosphoserine mark. TPR repeat units follow at residues 91 to 124, 125 to 158, and 159 to 192; these read AERLKTEGNEQMKVENFEAAVHFYGKAIELNPAN, AVYFCNRAAAYSKLGNYAGAVQDCERAICIDPSY, and SKAYGRMGLALSSLNKHTEAVAYYRKALELDPDN. Lys137 carries the N6-acetyllysine modification. The residue at position 301 (Ser301) is a Phosphoserine. Thr303 carries the post-translational modification Phosphothreonine. Ser305 carries the post-translational modification Phosphoserine.

It belongs to the SGT family. Homodimer. Homooligomer. Interacts with DNAJC5 and DNAJC5B. Interacts (via TPR repeats) with HSP90AA1. Interacts (via Gln-rich region) with SLC2A1. Interacts with HSP90AB1. Interacts (via TPR repeats) with HSPA8/Hsc70; the interaction is direct. Interacts with BAG6 (via ubiquitin-like domain); interaction prevents interaction between BAG6 and RNF126. Forms a multiprotein complex, at least composed of DNAJB12, DNAJB14, HSPA8/Hsc70 and SGTA; interaction with DNAJB14 and HSPA8/Hsc70 is direct.

It localises to the cytoplasm. Its subcellular location is the nucleus. In terms of biological role, co-chaperone that binds misfolded and hydrophobic patches-containing client proteins in the cytosol. Mediates their targeting to the endoplasmic reticulum but also regulates their sorting to the proteasome when targeting fails. Functions in tail-anchored/type II transmembrane proteins membrane insertion constituting with ASNA1 and the BAG6 complex a targeting module. Functions upstream of the BAG6 complex and ASNA1, binding more rapidly the transmembrane domain of newly synthesized proteins. It is also involved in the regulation of the endoplasmic reticulum-associated misfolded protein catabolic process via its interaction with BAG6: collaborates with the BAG6 complex to maintain hydrophobic substrates in non-ubiquitinated states. Competes with RNF126 for interaction with BAG6, preventing the ubiquitination of client proteins associated with the BAG6 complex. Binds directly to HSC70 and HSP70 and regulates their ATPase activity. In Bos taurus (Bovine), this protein is Small glutamine-rich tetratricopeptide repeat-containing protein alpha (SGTA).